Here is a 772-residue protein sequence, read N- to C-terminus: Glucocorticoid receptor (772 aa).

Residues 1–15 (MDSKESLSPPGREEV) show a composition bias toward basic and acidic residues. The disordered stretch occupies residues 1–22 (MDSKESLSPPGREEVPSSVLRP). The segment at 1–415 (MDSKESLSPP…TTAAGPPPKL (415 aa)) is modulating. Arg-25 is modified (omega-N-methylarginine). Residues 39–82 (APVRVPASSPSLAPAAQPDSKQQRLAVDFPKGSASNAQQPDLSR) are disordered. Positions 44-58 (PASSPSLAPAAQPDS) are enriched in low complexity. Phosphoserine is present on residues Ser-47, Ser-115, Ser-136, and Ser-143. A disordered region spans residues 132-186 (NRSASGADNPRSTAPAAGSAAPTEGFPKTHSDLASERQNPKGQTGGSAGSAKLHP). Residues 143 to 156 (STAPAAGSAAPTEG) show a composition bias toward low complexity. Residues 158–170 (PKTHSDLASERQN) show a composition bias toward basic and acidic residues. A phosphoserine mark is found at Ser-203, Ser-211, and Ser-226. Lys-258 participates in a covalent cross-link: Glycyl lysine isopeptide (Lys-Gly) (interchain with G-Cter in SUMO2). Glycyl lysine isopeptide (Lys-Gly) (interchain with G-Cter in SUMO); alternate cross-links involve residues Lys-277 and Lys-293. Residues Lys-277 and Lys-293 each participate in a glycyl lysine isopeptide (Lys-Gly) (interchain with G-Cter in SUMO2); alternate cross-link. Phosphoserine occurs at positions 307 and 400. A Glycyl lysine isopeptide (Lys-Gly) (interchain with G-Cter in ubiquitin) cross-link involves residue Lys-414. 2 consecutive NR C4-type zinc fingers follow at residues 416–436 (CLVCSDEASGCHYGVLTCGSC) and 452–476 (CAGRNDCIIDKIRRKNCPACRYRKC). The segment at residues 416–481 (CLVCSDEASG…RYRKCLQAGM (66 aa)) is a DNA-binding region (nuclear receptor). 4 positions are modified to N6-acetyllysine: Lys-475, Lys-487, Lys-489, and Lys-490. The interval 480-772 (GMNLEARKTK…NIKKLLFHQK (293 aa)) is interaction with CLOCK. A hinge region spans residues 482-518 (NLEARKTKKKIKGIQQTSTGVSQETSENPSNRTVVPA). The disordered stretch occupies residues 494–513 (GIQQTSTGVSQETSENPSNR). Polar residues predominate over residues 499–513 (STGVSQETSENPSNR). The region spanning 519–753 (ALPQLTPTLV…FPEMLAEIIT (235 aa)) is the NR LBD domain. The interval 527-692 (LVSLLEVIEP…EIRMTYIKEL (166 aa)) is interaction with CRY1. Lys-698 participates in a covalent cross-link: Glycyl lysine isopeptide (Lys-Gly) (interchain with G-Cter in SUMO).

Belongs to the nuclear hormone receptor family. NR3 subfamily. Heteromultimeric cytoplasmic complex with HSP90AA1, HSPA1A/HSPA1B, and FKBP5 or another immunophilin such as PPID, STIP1, or the immunophilin homolog PPP5C. Upon ligand binding FKBP5 dissociates from the complex and FKBP4 takes its place, thereby linking the complex to dynein and mediating transport to the nucleus, where the complex dissociates. Probably forms a complex composed of chaperones HSP90 and HSP70, co-chaperones CDC37, PPP5C, TSC1 and client protein TSC2, CDK4, AKT, RAF1 and NR3C1; this complex does not contain co-chaperones STIP1/HOP and PTGES3/p23. Directly interacts with UNC45A. Binds to DNA as a homodimer, and as heterodimer with NR3C2 or the retinoid X receptor. Binds STAT5A and STAT5B homodimers and heterodimers. Interacts with NRIP1, POU2F1, POU2F2 and TRIM28. Interacts with several coactivator complexes, including the SMARCA4 complex, CREBBP/EP300, TADA2L (Ada complex) and p160 coactivators such as NCOA2 and NCOA6. Interaction with BAG1 inhibits transactivation. Interacts with HEXIM1 and TGFB1I1. Interacts with NCOA1. Interacts with NCOA3, SMARCA4, SMARCC1, SMARCD1, and SMARCE1. Interacts with CLOCK, CRY1 and CRY2 in a ligand-dependent fashion. Interacts with CIART. Interacts with RWDD3. Interacts with UBE2I/UBC9 and this interaction is enhanced in the presence of RWDD3. Interacts with GRIP1. Interacts with NR4A3 (via nuclear receptor DNA-binding domain), represses transcription activity of NR4A3 on the POMC promoter Nur response element (NurRE). Directly interacts with PNRC2 to attract and form a complex with UPF1 and DCP1A; the interaction leads to rapid mRNA degradation. Interacts with GSK3B. Interacts with FNIP1 and FNIP2. Interacts (via C-terminus) with HNRNPU (via C-terminus). Interacts with MCM3AP. Interacts (via domain NR LBD) with HSP90AA1 and HSP90AB1. In the absence of hormonal ligand, interacts with TACC1. Interacts (via NR LBD domain) with ZNF764 (via KRAB domain); the interaction regulates transcription factor activity of NR3C1 by directing its actions toward certain biologic pathways. In terms of processing, acetylation by CLOCK reduces its binding to glucocorticoid response elements and its transcriptional activity. Post-translationally, increased proteasome-mediated degradation in response to glucocorticoids. Phosphorylated in the absence of hormone; becomes hyperphosphorylated in the presence of glucocorticoid. The Ser-203, Ser-226 and Ser-399-phosphorylated forms are mainly cytoplasmic, and the Ser-211-phosphorylated form is nuclear. Phosphorylation at Ser-211 increases transcriptional activity. Phosphorylation at Ser-203, Ser-226 and Ser-399 decreases signaling capacity. Phosphorylation at Ser-399 may protect from glucocorticoid-induced apoptosis. Phosphorylation at Ser-203 and Ser-211 is not required in regulation of chromosome segregation. May be dephosphorylated by PPP5C, attenuates NR3C1 action. In terms of processing, ubiquitinated by UBR5, leading to its degradation: UBR5 specifically recognizes and binds ligand-bound NR3C1 when it is not associated with coactivators (NCOAs). In presence of NCOAs, the UBR5-degron is not accessible, preventing its ubiquitination and degradation. Post-translationally, sumoylation at Lys-277 and Lys-293 negatively regulates its transcriptional activity. Sumoylation at Lys-698 positively regulates its transcriptional activity in the presence of RWDD3. Sumoylation at Lys-277 and Lys-293 is dispensable whereas sumoylation at Lys-698 is critical for the stimulatory effect of RWDD3 on its transcriptional activity. Heat shock increases sumoylation in a RWDD3-dependent manner.

Its subcellular location is the cytoplasm. The protein resides in the nucleus. The protein localises to the mitochondrion. It localises to the cytoskeleton. It is found in the spindle. Its subcellular location is the microtubule organizing center. The protein resides in the centrosome. The protein localises to the chromosome. It localises to the nucleoplasm. Functionally, receptor for glucocorticoids (GC). Has a dual mode of action: as a transcription factor that binds to glucocorticoid response elements (GRE), both for nuclear and mitochondrial DNA, and as a modulator of other transcription factors. Affects inflammatory responses, cellular proliferation and differentiation in target tissues. Involved in chromatin remodeling. Plays a role in rapid mRNA degradation by binding to the 5' UTR of target mRNAs and interacting with PNRC2 in a ligand-dependent manner which recruits the RNA helicase UPF1 and the mRNA-decapping enzyme DCP1A, leading to RNA decay. Could act as a coactivator for STAT5-dependent transcription upon growth hormone (GH) stimulation and could reveal an essential role of hepatic GR in the control of body growth. Mediates glucocorticoid-induced apoptosis. Promotes accurate chromosome segregation during mitosis. May act as a tumor suppressor. May play a negative role in adipogenesis through the regulation of lipolytic and antilipogenic gene expression. The protein is Glucocorticoid receptor (NR3C1) of Oryctolagus cuniculus (Rabbit).